The chain runs to 987 residues: MKVVNLKQAILQAWKERWSDYQWAINMKKFFPKGATWDILNLAEALLEQAMIGPSPNPLILSYLKYAISSQMVSCSSVLTAISKFDDFSRDLCVQALLDIMDMFCDRLSCHGKAEECIGLCRALLSALHWLLRCTAASAERLQEGLEAGTPAPGEKQLALCLQCLEKTLSSTKNRALLHIAKLEEASSWTAIEHSLLKLGEILANLSNPQLRSQAERCGTLIRSIPSMLSVHSEQLHKTGFPTIHALILLEGTMNLTGEMQPLVEQLMMVKRMQHIPTPLFVLEIWKACFVGLIESPEGTQELKWTAFTYLKIPQVLVKLKKYFHGEKDFTEDVNCAFEFLLKLTPLLDKADQRCNCDCTNFLLQECNKQGLLSEVNFASLVGKRTADRDPQLKSSENANIQPNPGLILRAEPTVTNILKTMDADHSKSPEGLLGVLGHMLSGKSLDLLLAAAAATGKLKSFARKFINLNEFTTHGSGESTKTASVRALLFDISFLMLCHVAQTYGSEVILSESSSGEEVPFFETWMQTCMPEEGKILNPDHPCFRPDSTKVESLVALLNNSSEMKLVQMKWHEACLSISAAILEILNAWENGVLAFESIQKITDNIKGKVCSLAVCAVAWLVAHVRMLGLDEREKSLQMIRQLAGPLYSENTLQFYNERVVIMNSILEHMCADVLQQTATQIKFPSTGVDTMPYWNLLPPKRPIKEVLTDIFAKVLEKGWVDSRSIHILDTLLHMGGVYWFCNNLIKELLKETRKEHTLRAVQLLYSIFCLDMQQVTLVLLGHILPGLLTDSSKWHSLMDPPGTALAKLAVWCALSSYSSHKGQASSRQKKRHREDIEDYVSLFPVEDMQPSKLMRLLSSSDDDANILSSPTDRSMNSSLSASQLHTVNMRDPLNRVLANLFLLISSILGSRTAGPHTQFVQWFMEECVGCLEQDSRGSILQFMPFTTVSELVKVSAMSSPKVVLAITDLSLPLGRQVAAKAIAAL.

Short sequence motifs (LXXLL motif) lie at residues 128 to 132 (LHWLL), 344 to 348 (LTPLL), 446 to 450 (LDLLL), 555 to 559 (LVALL), 786 to 790 (LPGLL), and 855 to 859 (LMRLL). A phosphoserine mark is found at serine 860 and serine 871.

This sequence belongs to the Mediator complex subunit 24 family. Component of the Mediator complex, which is composed of MED1, MED4, MED6, MED7, MED8, MED9, MED10, MED11, MED12, MED13, MED13L, MED14, MED15, MED16, MED17, MED18, MED19, MED20, MED21, MED22, MED23, MED24, MED25, MED26, MED27, MED29, MED30, MED31, CCNC, CDK8 and CDC2L6/CDK11. The MED12, MED13, CCNC and CDK8 subunits form a distinct module termed the CDK8 module. Mediator containing the CDK8 module is less active than Mediator lacking this module in supporting transcriptional activation. Individual preparations of the Mediator complex lacking one or more distinct subunits have been variously termed ARC, CRSP, DRIP, PC2, SMCC and TRAP. Interacts with AR. Interacts with MED1 and MED10. As to expression, expressed in the adrenal gland, brain, epididymis, heart, kidney, liver, ovary, pancreas, prostate, skeletal muscle, small intestine, spleen, stomach, testis and thymus.

It localises to the nucleus. Functionally, component of the Mediator complex, a coactivator involved in the regulated transcription of nearly all RNA polymerase II-dependent genes. Mediator functions as a bridge to convey information from gene-specific regulatory proteins to the basal RNA polymerase II transcription machinery. Mediator is recruited to promoters by direct interactions with regulatory proteins and serves as a scaffold for the assembly of a functional preinitiation complex with RNA polymerase II and the general transcription factors. Required for basal and activator-dependent transcription. The polypeptide is Mediator of RNA polymerase II transcription subunit 24 (Med24) (Mus musculus (Mouse)).